A 602-amino-acid polypeptide reads, in one-letter code: Elongation factor 4 (602 aa).

Positions 7–189 constitute a tr-type G domain; sequence RNIRNFSIIA…AIVQRIPAPQ (183 aa). Residues 19–24 and 136–139 each bind GTP; these read DHGKST and NKID.

Belongs to the TRAFAC class translation factor GTPase superfamily. Classic translation factor GTPase family. LepA subfamily.

It is found in the cell inner membrane. The catalysed reaction is GTP + H2O = GDP + phosphate + H(+). Functionally, required for accurate and efficient protein synthesis under certain stress conditions. May act as a fidelity factor of the translation reaction, by catalyzing a one-codon backward translocation of tRNAs on improperly translocated ribosomes. Back-translocation proceeds from a post-translocation (POST) complex to a pre-translocation (PRE) complex, thus giving elongation factor G a second chance to translocate the tRNAs correctly. Binds to ribosomes in a GTP-dependent manner. The chain is Elongation factor 4 from Xylella fastidiosa (strain M23).